Here is a 61-residue protein sequence, read N- to C-terminus: [Val1,Thr6]-bradykinyl-Val,Asp (61 aa).

A signal peptide spans 1 to 22 (MAFLKKSLFLVLFLGVVSLSFC). Residues 23 to 48 (EEEEREEHEEEKREAEAAESAENLIS) constitute a propeptide that is removed on maturation. The tract at residues 27 to 61 (REEHEEEKREAEAAESAENLISKRVPPGFTPFRVD) is disordered.

As to expression, expressed by the skin glands. Expression levels in inguinal glands and granular glands are virtually the same.

The protein resides in the secreted. Its function is as follows. Induces contraction of rat ileum smooth muscle (EC(50)=2.73 uM) but has no activity towards rat smooth muscle from tail artery, urinary bladder or uterus. Binds to both bradykinin receptor B1 (BDKRB1) and B2 (BDKRB2); the effect via BDKRB1 is stronger. This Physalaemus nattereri (Cuyaba dwarf frog) protein is [Val1,Thr6]-bradykinyl-Val,Asp.